Consider the following 141-residue polypeptide: HTH-type transcriptional repressor NsrR (141 aa).

Positions Gln2–Glu129 constitute an HTH rrf2-type domain. Residues Ile28 to Arg51 constitute a DNA-binding region (H-T-H motif). [2Fe-2S] cluster contacts are provided by Cys91, Cys96, and Cys102.

It depends on [2Fe-2S] cluster as a cofactor.

In terms of biological role, nitric oxide-sensitive repressor of genes involved in protecting the cell against nitrosative stress. May require iron for activity. The protein is HTH-type transcriptional repressor NsrR of Salmonella choleraesuis (strain SC-B67).